The primary structure comprises 311 residues: Probable manganese-dependent inorganic pyrophosphatase (311 aa).

His-9, Asp-13, Asp-15, Asp-77, His-99, and Asp-151 together coordinate Mn(2+).

Belongs to the PPase class C family. It depends on Mn(2+) as a cofactor.

Its subcellular location is the cytoplasm. The enzyme catalyses diphosphate + H2O = 2 phosphate + H(+). This Streptococcus equi subsp. zooepidemicus (strain H70) protein is Probable manganese-dependent inorganic pyrophosphatase.